The following is a 305-amino-acid chain: Probable alpha-L-glutamate ligase (305 aa).

Residues 119–301 (LQVLAAQHIP…IAGLIIDYLL (183 aa)) form the ATP-grasp domain. ATP-binding positions include lysine 155, 192–193 (DF), aspartate 201, and 225–227 (RAN). 3 residues coordinate Mg(2+): aspartate 262, glutamate 274, and asparagine 276. 3 residues coordinate Mn(2+): aspartate 262, glutamate 274, and asparagine 276.

The protein belongs to the RimK family. Requires Mg(2+) as cofactor. Mn(2+) is required as a cofactor.

This is Probable alpha-L-glutamate ligase from Haemophilus ducreyi (strain 35000HP / ATCC 700724).